The sequence spans 32 residues: Growth hormone-related protein 4 (32 aa).

A disulfide bridge connects residues cysteine 4 and cysteine 11.

It belongs to the somatotropin/prolactin family. Glycosylated. In terms of tissue distribution, placental basal zone cells.

The protein resides in the secreted. The polypeptide is Growth hormone-related protein 4 (Rattus norvegicus (Rat)).